Reading from the N-terminus, the 130-residue chain is Large ribosomal subunit protein uL14 (130 aa).

It belongs to the universal ribosomal protein uL14 family. In terms of assembly, part of the 50S ribosomal subunit. Forms a cluster with proteins L3 and L19. In the 70S ribosome, L14 and L19 interact and together make contacts with the 16S rRNA in bridges B5 and B8.

Its function is as follows. Binds to 23S rRNA. Forms part of two intersubunit bridges in the 70S ribosome. This is Large ribosomal subunit protein uL14 from Leptospira biflexa serovar Patoc (strain Patoc 1 / Ames).